A 342-amino-acid polypeptide reads, in one-letter code: Anthranilate phosphoribosyltransferase (342 aa).

Residues G83, 86–87 (GD), T91, 93–96 (NVST), 111–119 (KHGNRSVSG), and S123 contribute to the 5-phospho-alpha-D-ribose 1-diphosphate site. G83 is an anthranilate binding site. S95 contributes to the Mg(2+) binding site. N114 is an anthranilate binding site. Residue R169 coordinates anthranilate. Residues D228 and E229 each contribute to the Mg(2+) site.

This sequence belongs to the anthranilate phosphoribosyltransferase family. As to quaternary structure, homodimer. Requires Mg(2+) as cofactor.

The catalysed reaction is N-(5-phospho-beta-D-ribosyl)anthranilate + diphosphate = 5-phospho-alpha-D-ribose 1-diphosphate + anthranilate. It functions in the pathway amino-acid biosynthesis; L-tryptophan biosynthesis; L-tryptophan from chorismate: step 2/5. Catalyzes the transfer of the phosphoribosyl group of 5-phosphorylribose-1-pyrophosphate (PRPP) to anthranilate to yield N-(5'-phosphoribosyl)-anthranilate (PRA). The polypeptide is Anthranilate phosphoribosyltransferase (Halorhodospira halophila (strain DSM 244 / SL1) (Ectothiorhodospira halophila (strain DSM 244 / SL1))).